We begin with the raw amino-acid sequence, 119 residues long: Large ribosomal subunit protein uL14 (119 aa).

This sequence belongs to the universal ribosomal protein uL14 family. Part of the 50S ribosomal subunit. Forms a cluster with proteins L3 and L19. In the 70S ribosome, L14 and L19 interact and together make contacts with the 16S rRNA in bridges B5 and B8.

Functionally, binds to 23S rRNA. Forms part of two intersubunit bridges in the 70S ribosome. This is Large ribosomal subunit protein uL14 from Ehrlichia canis (strain Jake).